The primary structure comprises 312 residues: Olfactory receptor 1493 (312 aa).

The Extracellular portion of the chain corresponds to 1–23; the sequence is MNNKTVITHFLLLGLPIPPEHQQ. N-linked (GlcNAc...) asparagine glycosylation is present at N3. Residues 24-48 traverse the membrane as a helical segment; sequence LFFALFLIMYLTTFLGNLLIVVLVQ. The Cytoplasmic portion of the chain corresponds to 49–55; sequence LDSHLHT. Residues 56–77 form a helical membrane-spanning segment; the sequence is PMYLFLSNLSFSDLCFSSVTML. Residues 78–98 lie on the Extracellular side of the membrane; that stretch reads KLLQNIQSQVPSISYAGCLTQ. Cysteines 95 and 187 form a disulfide. Residues 99–118 traverse the membrane as a helical segment; sequence IFFFLLFGYLGNFLLVAMAY. Topologically, residues 119-137 are cytoplasmic; the sequence is DRYVAICFPLHYTNIMSHK. A helical membrane pass occupies residues 138–156; that stretch reads LCTCLLLVFWIMTSSHAMM. The Extracellular portion of the chain corresponds to 157–194; the sequence is HTLLAARLSFCENNVLLNFFCDLFVLLKLACSDTYVNE. A helical membrane pass occupies residues 195 to 217; that stretch reads LMIHIMGVIIIVIPFVLIVISYA. Topologically, residues 218–234 are cytoplasmic; it reads KIISSILKVPSTQSIHK. A helical membrane pass occupies residues 235-258; that stretch reads VFSTCGSHLSVVSLFYGTIIGLYL. Over 259 to 270 the chain is Extracellular; it reads CPSGDNFSLKGS. A helical transmembrane segment spans residues 271–290; the sequence is AMAMMYTVVTPMLNPFIYSL. The Cytoplasmic segment spans residues 291-312; that stretch reads RNRDMKQALIRVTCSKKISLPW.

The protein belongs to the G-protein coupled receptor 1 family. As to expression, olfactory epithelium.

The protein localises to the cell membrane. Its function is as follows. Odorant receptor. This chain is Olfactory receptor 1493 (Olr1493), found in Rattus norvegicus (Rat).